The chain runs to 231 residues: NADH-ubiquinone oxidoreductase chain 4 (231 aa).

6 helical membrane-spanning segments follow: residues 1–21 (PIAGSMVLAAILLKLGGYGMI), 34–54 (MFMPFIVLALWGAILANLTCL), 63–85 (IAYSSISHMGLVVAAIIIQTPWG), 89–111 (AMALMIAHGFTSSALFCLANTTY), 128–148 (ILPMTTTWWLLANLMNIAIPP), and 156–176 (FLIMSALFNWAPTTIILLGLS).

It belongs to the complex I subunit 4 family.

The protein resides in the mitochondrion membrane. It catalyses the reaction a ubiquinone + NADH + 5 H(+)(in) = a ubiquinol + NAD(+) + 4 H(+)(out). Functionally, core subunit of the mitochondrial membrane respiratory chain NADH dehydrogenase (Complex I) that is believed to belong to the minimal assembly required for catalysis. Complex I functions in the transfer of electrons from NADH to the respiratory chain. The immediate electron acceptor for the enzyme is believed to be ubiquinone. The protein is NADH-ubiquinone oxidoreductase chain 4 (MT-ND4) of Bothriechis schlegelii (Eyelash palm pitviper).